The following is a 167-amino-acid chain: MSSARTVRKDKPRGRHHGLTQQKRQEIKEAFELFDTDGSGTIDAKELNVAMRALGFEMTEEQINQMIADVDKDGSGAIDFDEFCHMMTAKIGERDTKEELMKAFRIIDQDNNGKISPEDIQRIAKELGENFTVKDIQDMIEEADRDRDGEVNVEEFLRMMKRTSYAY.

The segment covering 1 to 18 (MSSARTVRKDKPRGRHHG) has biased composition (basic residues). The segment at 1–23 (MSSARTVRKDKPRGRHHGLTQQK) is disordered. EF-hand domains are found at residues 22-57 (QKRQEIKEAFELFDTDGSGTIDAKELNVAMRALGFE), 58-93 (MTEEQINQMIADVDKDGSGAIDFDEFCHMMTAKIGE), 95-130 (DTKEELMKAFRIIDQDNNGKISPEDIQRIAKELGEN), and 131-166 (FTVKDIQDMIEEADRDRDGEVNVEEFLRMMKRTSYA). Ca(2+) is bound by residues D35, D37, S39, T41, E46, D71, D73, S75, E82, D108, D110, N112, K114, D119, D144, D146, D148, E150, and E155.

Belongs to the centrin family.

The protein resides in the cytoplasm. Its subcellular location is the cytoskeleton. It localises to the microtubule organizing center. Functionally, plays a fundamental role in microtubule-organizing center structure and function. This chain is Caltractin, found in Atriplex nummularia (Old man saltbush).